The following is a 134-amino-acid chain: Profilin-2 (134 aa).

Cys-13 and Cys-118 are joined by a disulfide. Positions 84-100 (AVIRGKKGSGGITIKKT) match the Involved in PIP2 interaction motif. Position 114 is a phosphothreonine (Thr-114).

Belongs to the profilin family. As to quaternary structure, occurs in many kinds of cells as a complex with monomeric actin in a 1:1 ratio. In terms of processing, phosphorylated by MAP kinases.

Its subcellular location is the cytoplasm. It localises to the cytoskeleton. Functionally, binds to actin and affects the structure of the cytoskeleton. At high concentrations, profilin prevents the polymerization of actin, whereas it enhances it at low concentrations. The protein is Profilin-2 of Olea europaea (Common olive).